A 432-amino-acid chain; its full sequence is Mitochondrial distribution and morphology protein 12 (432 aa).

The SMP-LTD domain maps to 1-432; it reads MSIEVDWRAA…VFPSFWTFLI (432 aa). 2 disordered regions span residues 182-273 and 354-377; these read WTDP…PRMR and QQEA…PKRQ. The span at 214-234 shows a compositional bias: low complexity; that stretch reads TSNPTSRPSTSSTLPSHPSAS. 2 stretches are compositionally biased toward basic and acidic residues: residues 243-253 and 355-364; these read TGKEHGSLAED and QEARGQDDRP.

Belongs to the MDM12 family. As to quaternary structure, component of the ER-mitochondria encounter structure (ERMES) or MDM complex, composed of mmm1, mdm10, mdm12 and mdm34. A mmm1 homodimer associates with one molecule of mdm12 on each side in a pairwise head-to-tail manner, and the SMP-LTD domains of mmm1 and mdm12 generate a continuous hydrophobic tunnel for phospholipid trafficking.

It is found in the mitochondrion outer membrane. The protein resides in the endoplasmic reticulum membrane. In terms of biological role, component of the ERMES/MDM complex, which serves as a molecular tether to connect the endoplasmic reticulum (ER) and mitochondria. Components of this complex are involved in the control of mitochondrial shape and protein biogenesis, and function in nonvesicular lipid trafficking between the ER and mitochondria. Mdm12 is required for the interaction of the ER-resident membrane protein MMM1 and the outer mitochondrial membrane-resident beta-barrel protein mdm10. The mdm12-mmm1 subcomplex functions in the major beta-barrel assembly pathway that is responsible for biogenesis of all mitochondrial outer membrane beta-barrel proteins, and acts in a late step after the SAM complex. The mdm10-mdm12-mmm1 subcomplex further acts in the TOM40-specific pathway after the action of the mdm12-mmm1 complex. Essential for establishing and maintaining the structure of mitochondria and maintenance of mtDNA nucleoids. This Aspergillus flavus (strain ATCC 200026 / FGSC A1120 / IAM 13836 / NRRL 3357 / JCM 12722 / SRRC 167) protein is Mitochondrial distribution and morphology protein 12.